Reading from the N-terminus, the 172-residue chain is Large ribosomal subunit protein bL17 (172 aa).

A disordered region spans residues 153-172 (AQAAEPVAAAEPATPATTAG).

It belongs to the bacterial ribosomal protein bL17 family. In terms of assembly, part of the 50S ribosomal subunit. Contacts protein L32.

The sequence is that of Large ribosomal subunit protein bL17 from Sorangium cellulosum (strain So ce56) (Polyangium cellulosum (strain So ce56)).